Here is an 81-residue protein sequence, read N- to C-terminus: uncharacterized protein (81 aa).

2 consecutive transmembrane segments (helical) span residues Phe10–Leu30 and Val56–Ile76.

It localises to the host membrane. This is an uncharacterized protein from Acidianus two-tailed virus (ATV).